The primary structure comprises 157 residues: MGIIDFFMALMQDMILSAIPAVGFAMVFNVPHRALPWCALLGALGHGSRMLMMSAGFNIEWSTFMASLLVGSIGIQWSRWYLAHPKVFTVAAVIPMFPGISAYTAMISAVKISHLGYSEPMMITLLTNFLKASSIVGALSIGLSVPGLWLYRKRPRV.

Transmembrane regions (helical) follow at residues 6 to 26 (FFMA…GFAM), 55 to 75 (AGFN…SIGI), 87 to 107 (VFTV…TAMI), and 129 to 149 (FLKA…PGLW).

The protein belongs to the ThrE exporter (TC 2.A.79) family. In terms of assembly, the transporter is composed of YjjB and YjjP.

Its subcellular location is the cell inner membrane. Its function is as follows. Involved in succinate export with YjjP. Both proteins are required for export. In Salmonella arizonae (strain ATCC BAA-731 / CDC346-86 / RSK2980), this protein is Probable succinate transporter subunit YjjB.